The following is a 234-amino-acid chain: NAD-dependent protein deacylase (234 aa).

The Deacetylase sirtuin-type domain occupies 1-234 (MTKQVRIVVL…LVPHYLAQFL (234 aa)). 12–31 (GAGISAESGIRTFRATDGLW) is an NAD(+) binding site. Substrate contacts are provided by Tyr56 and Arg59. 93–96 (QNVD) serves as a coordination point for NAD(+). Residue His111 is the Proton acceptor of the active site. Positions 119 and 138 each coordinate Zn(2+). NAD(+) contacts are provided by residues 178–180 (GTS), 204–206 (NLE), and Ala222.

This sequence belongs to the sirtuin family. Class III subfamily. Requires Zn(2+) as cofactor.

Its subcellular location is the cytoplasm. It catalyses the reaction N(6)-acetyl-L-lysyl-[protein] + NAD(+) + H2O = 2''-O-acetyl-ADP-D-ribose + nicotinamide + L-lysyl-[protein]. The enzyme catalyses N(6)-succinyl-L-lysyl-[protein] + NAD(+) + H2O = 2''-O-succinyl-ADP-D-ribose + nicotinamide + L-lysyl-[protein]. NAD-dependent lysine deacetylase and desuccinylase that specifically removes acetyl and succinyl groups on target proteins. Modulates the activities of several proteins which are inactive in their acylated form. In Pasteurella multocida (strain Pm70), this protein is NAD-dependent protein deacylase.